The following is a 457-amino-acid chain: Siroheme synthase (457 aa).

Residues Met-1–Thr-204 form a precorrin-2 dehydrogenase /sirohydrochlorin ferrochelatase region. Residues Asp-22 to Val-23 and Leu-43 to Ala-44 each bind NAD(+). Ser-128 carries the phosphoserine modification. The tract at residues Gly-216–His-457 is uroporphyrinogen-III C-methyltransferase. An S-adenosyl-L-methionine-binding site is contributed by Pro-225. Residue Asp-248 is the Proton acceptor of the active site. Catalysis depends on Lys-270, which acts as the Proton donor. S-adenosyl-L-methionine contacts are provided by residues Gly-301–Asp-303, Ile-306, Thr-331–Ala-332, Met-382, and Gly-411.

In the N-terminal section; belongs to the precorrin-2 dehydrogenase / sirohydrochlorin ferrochelatase family. This sequence in the C-terminal section; belongs to the precorrin methyltransferase family.

The enzyme catalyses uroporphyrinogen III + 2 S-adenosyl-L-methionine = precorrin-2 + 2 S-adenosyl-L-homocysteine + H(+). It carries out the reaction precorrin-2 + NAD(+) = sirohydrochlorin + NADH + 2 H(+). The catalysed reaction is siroheme + 2 H(+) = sirohydrochlorin + Fe(2+). It participates in cofactor biosynthesis; adenosylcobalamin biosynthesis; precorrin-2 from uroporphyrinogen III: step 1/1. Its pathway is cofactor biosynthesis; adenosylcobalamin biosynthesis; sirohydrochlorin from precorrin-2: step 1/1. The protein operates within porphyrin-containing compound metabolism; siroheme biosynthesis; precorrin-2 from uroporphyrinogen III: step 1/1. It functions in the pathway porphyrin-containing compound metabolism; siroheme biosynthesis; siroheme from sirohydrochlorin: step 1/1. It participates in porphyrin-containing compound metabolism; siroheme biosynthesis; sirohydrochlorin from precorrin-2: step 1/1. In terms of biological role, multifunctional enzyme that catalyzes the SAM-dependent methylations of uroporphyrinogen III at position C-2 and C-7 to form precorrin-2 via precorrin-1. Then it catalyzes the NAD-dependent ring dehydrogenation of precorrin-2 to yield sirohydrochlorin. Finally, it catalyzes the ferrochelation of sirohydrochlorin to yield siroheme. The sequence is that of Siroheme synthase from Escherichia fergusonii (strain ATCC 35469 / DSM 13698 / CCUG 18766 / IAM 14443 / JCM 21226 / LMG 7866 / NBRC 102419 / NCTC 12128 / CDC 0568-73).